The primary structure comprises 185 residues: ATP-dependent protease subunit HslV (185 aa).

Residue threonine 6 is part of the active site. Residues glycine 162, cysteine 165, and threonine 168 each coordinate Na(+).

The protein belongs to the peptidase T1B family. HslV subfamily. As to quaternary structure, a double ring-shaped homohexamer of HslV is capped on each side by a ring-shaped HslU homohexamer. The assembly of the HslU/HslV complex is dependent on binding of ATP.

It is found in the cytoplasm. The catalysed reaction is ATP-dependent cleavage of peptide bonds with broad specificity.. Allosterically activated by HslU binding. Protease subunit of a proteasome-like degradation complex believed to be a general protein degrading machinery. The polypeptide is ATP-dependent protease subunit HslV (Nitratidesulfovibrio vulgaris (strain DSM 19637 / Miyazaki F) (Desulfovibrio vulgaris)).